The primary structure comprises 267 residues: Tryptophan synthase alpha chain (267 aa).

Residues Glu-49 and Asp-60 each act as proton acceptor in the active site.

Belongs to the TrpA family. In terms of assembly, tetramer of two alpha and two beta chains.

The catalysed reaction is (1S,2R)-1-C-(indol-3-yl)glycerol 3-phosphate + L-serine = D-glyceraldehyde 3-phosphate + L-tryptophan + H2O. It functions in the pathway amino-acid biosynthesis; L-tryptophan biosynthesis; L-tryptophan from chorismate: step 5/5. Its function is as follows. The alpha subunit is responsible for the aldol cleavage of indoleglycerol phosphate to indole and glyceraldehyde 3-phosphate. This chain is Tryptophan synthase alpha chain, found in Acinetobacter baylyi (strain ATCC 33305 / BD413 / ADP1).